We begin with the raw amino-acid sequence, 429 residues long: Ribosomal RNA small subunit methyltransferase B (429 aa).

S-adenosyl-L-methionine contacts are provided by residues 254-260, Asp-277, Asp-303, and Asp-322; that span reads CAAPGGK. Cys-375 (nucleophile) is an active-site residue.

It belongs to the class I-like SAM-binding methyltransferase superfamily. RsmB/NOP family.

The protein resides in the cytoplasm. The enzyme catalyses cytidine(967) in 16S rRNA + S-adenosyl-L-methionine = 5-methylcytidine(967) in 16S rRNA + S-adenosyl-L-homocysteine + H(+). Specifically methylates the cytosine at position 967 (m5C967) of 16S rRNA. This is Ribosomal RNA small subunit methyltransferase B from Photorhabdus laumondii subsp. laumondii (strain DSM 15139 / CIP 105565 / TT01) (Photorhabdus luminescens subsp. laumondii).